The chain runs to 2758 residues: Highly reducing polyketide synthase NEC1 (2758 aa).

The 340-residue stretch at Glu153 to Asp492 folds into the Ketosynthase family 3 (KS3) domain. The disordered stretch occupies residues Pro512–Thr576. Residues Thr566–Thr576 are compositionally biased toward low complexity. The segment at Val700 to Asp1044 is malonyl-CoA:ACP transacylase (MAT) domain. The active-site For malonyltransferase activity is the Ser790. Positions His1124 to Thr1255 are N-terminal hotdog fold. Positions His1124–Ser1442 are dehydratase (DH) domain. The 320-residue stretch at His1124–Ser1443 folds into the PKS/mFAS DH domain. The active-site Proton acceptor; for dehydratase activity is His1156. Residues Thr1283–Ser1443 are C-terminal hotdog fold. Catalysis depends on Asp1351, which acts as the Proton donor; for dehydratase activity. The segment at Leu1622 to Leu1727 is methyltransferase (CMet) domain. The enoyl reductase (ER) domain stretch occupies residues Gly2031–Leu2344. The tract at residues Ala2372–Val2553 is ketoreductase (KR) domain. One can recognise a Carrier domain in the interval Glu2673–Ser2750. Ser2710 bears the O-(pantetheine 4'-phosphoryl)serine mark.

Functionally, highly reducing polyketide synthase; part of the gene cluster that mediates the biosynthesis of nectriapyrone and its analogs phomopyrone A, acropyrone and zaepyrone. The nectriapyrone biosynthetic gene cluster consists of two genes, the highly reducing polyketide synthase NEC1 that produces a demethylated analog of nectriapyrone from one unit of acetyl-CoA and one unit of malonyl-CoA; and the O-methyltransferase NEC2 that further methylates the NEC1 product to yield nectriapyrone. Nectriapyrone is further hydrolyzed to nectriapyrone D, also known as gulypyrone B, by an unidentified hydrolase localized outside the nectriapyrone cluster. The sequence is that of Highly reducing polyketide synthase NEC1 from Pyricularia oryzae (strain 70-15 / ATCC MYA-4617 / FGSC 8958) (Rice blast fungus).